The sequence spans 62 residues: MQKLFIVFVLFCILRLDAEVDGRTATFCTQSICEESCKRQNKNGRCVIEAEGSLIYHLCKCY.

The signal sequence occupies residues 1–18; that stretch reads MQKLFIVFVLFCILRLDA. 3 disulfide bridges follow: Cys-28–Cys-46, Cys-33–Cys-59, and Cys-37–Cys-61.

Belongs to the short scorpion toxin superfamily. Potassium channel inhibitor family. Alpha-KTx 22 subfamily. In terms of tissue distribution, expressed by the venom gland.

Its subcellular location is the secreted. May block potassium channels. In Olivierus martensii (Manchurian scorpion), this protein is Potassium channel toxin alpha-KTx 22.1.